The chain runs to 666 residues: MQHVNHSSFDKASKAGFIIALGIVYGDIGTSPLYTMQSLVENQGGISSVTESFILGSISLIIWTLTLITTIKYVLVALKADNHHEGGIFSLYTLVRKMTPWLIVPAVIGGATLLSDGALTPAVTVTSAVEGLKVVPSLQHIFQNQSNVIFATLFILLLLFAIQRFGTGVIGKLFGPIMFIWFAFLGISGFLNSFAHPEVFKAINPYYGLKLLFSPENHKGIFILGSIFLATTGAEALYSDLGHVGRGNIHVSWPFVKVAIILSYCGQGAWILANKNAGNELNPFFASIPSQFTMHVVILATLAAIIASQALISGSFTLVSEAMRLKIFPQFRSTYPGDNIGQTYIPVINWFLFAITTSIVLLFKTSAHMEAAYGLAITITMLMTTILLSFFLIQKGVKRGLVLLMMIFFGILEGIFFLASAVKFMHGGYVVVIIAVAIIFIMTIWYKGSKIVSRYVKLLDLKDYIGQLDKLRHDHRYPIYHTNVVYLTNRMEGDMIDKSIMYSILDKRPKKAQVYWFVNIKVTDEPYTAEYKVDMMGTDFIVKVELYLGFKMRQTVSRYLRTIVEELLESGRLPKQGKTYSVRPDSKVGDFRFIVLDERFSSSQNLKPGERFVMLMKSSIKHWTATPIRWFGLQFSEVTTEVVPLIFTANRGLPIKEKIELTTTGD.

12 helical membrane-spanning segments follow: residues 16-36, 58-78, 99-119, 141-161, 167-187, 221-241, 253-273, 292-312, 343-363, 373-393, 402-422, and 424-444; these read GFIIALGIVYGDIGTSPLYTM, ISLIIWTLTLITTIKYVLVAL, TPWLIVPAVIGGATLLSDGAL, IFQNQSNVIFATLFILLLLFA, TGVIGKLFGPIMFIWFAFLGI, IFILGSIFLATTGAEALYSDL, WPFVKVAIILSYCGQGAWILA, FTMHVVILATLAAIIASQALI, TYIPVINWFLFAITTSIVLLF, YGLAITITMLMTTILLSFFLI, VLLMMIFFGILEGIFFLASAV, and FMHGGYVVVIIAVAIIFIMTI.

The protein belongs to the HAK/KUP transporter (TC 2.A.72) family.

The protein resides in the cell membrane. The enzyme catalyses K(+)(in) + H(+)(in) = K(+)(out) + H(+)(out). In terms of biological role, transport of potassium into the cell. Likely operates as a K(+):H(+) symporter. The sequence is that of Probable potassium transport system protein Kup from Streptococcus agalactiae serotype Ia (strain ATCC 27591 / A909 / CDC SS700).